Consider the following 258-residue polypeptide: Indole-3-glycerol phosphate synthase (258 aa).

Belongs to the TrpC family.

The catalysed reaction is 1-(2-carboxyphenylamino)-1-deoxy-D-ribulose 5-phosphate + H(+) = (1S,2R)-1-C-(indol-3-yl)glycerol 3-phosphate + CO2 + H2O. It participates in amino-acid biosynthesis; L-tryptophan biosynthesis; L-tryptophan from chorismate: step 4/5. This is Indole-3-glycerol phosphate synthase from Chlorobium phaeovibrioides (strain DSM 265 / 1930) (Prosthecochloris vibrioformis (strain DSM 265)).